Reading from the N-terminus, the 314-residue chain is Cyclin-dependent kinase 2 (314 aa).

Positions 8-287 (FQRAEKIGEG…AKDALQHAYF (280 aa)) constitute a Protein kinase domain. ATP-binding positions include 14 to 22 (IGEGTYGIV) and lysine 37. Threonine 18 is subject to Phosphothreonine. Tyrosine 19 is subject to Phosphotyrosine. The active-site Proton acceptor is aspartate 130. A Phosphotyrosine modification is found at tyrosine 162. Threonine 163 is modified (phosphothreonine).

Belongs to the protein kinase superfamily. CMGC Ser/Thr protein kinase family. CDC2/CDKX subfamily. Interacts with cyclin CycG.

It carries out the reaction L-seryl-[protein] + ATP = O-phospho-L-seryl-[protein] + ADP + H(+). The catalysed reaction is L-threonyl-[protein] + ATP = O-phospho-L-threonyl-[protein] + ADP + H(+). It catalyses the reaction [DNA-directed RNA polymerase] + ATP = phospho-[DNA-directed RNA polymerase] + ADP + H(+). Its function is as follows. Like Cdk1, could play a key role in the control of the eukaryotic cell cycle. This is Cyclin-dependent kinase 2 from Drosophila melanogaster (Fruit fly).